The chain runs to 144 residues: Complexin-1 (144 aa).

A compositionally biased stretch (gly residues) spans 1–10; the sequence is MVSFLGGGLL. The segment at 1–119 is disordered; sequence MVSFLGGGLL…SGFPKNLDDL (119 aa). 2 stretches are compositionally biased toward basic and acidic residues: residues 18-27 and 36-86; these read LEEKEDKKEG and AEAK…EGRL. The stretch at 29–67 forms a coiled coil; it reads EEEDPEIAEAKREAEEKRNEKYRKMEEEREVMRQGIRDK. A compositionally biased stretch (polar residues) spans 103–112; the sequence is LQSSAQSSGF. A Cysteine methyl ester modification is found at Cys141. A lipid anchor (S-farnesyl cysteine) is attached at Cys141. A propeptide spans 142 to 144 (removed in mature form); it reads NLQ.

Belongs to the complexin/synaphin family. As to quaternary structure, binds to the SNARE core complex containing SNAP25, synaptobrevin and syntaxin-1. In terms of tissue distribution, expressed in a subset of neurons in the central nervous system, including large serotoninergic Retzius neurons and pressure-sensitive P cells.

The protein localises to the membrane. Functionally, positively regulates a late step in synaptic vesicle exocytosis. In Hirudo medicinalis (Medicinal leech), this protein is Complexin-1 (cpx1).